We begin with the raw amino-acid sequence, 134 residues long: Probable glycine cleavage system H protein (134 aa).

The Lipoyl-binding domain occupies 29–110; the sequence is TVLVGITDYA…PYGAWIAKIK (82 aa). N6-lipoyllysine is present on lysine 70.

This sequence belongs to the GcvH family. In terms of assembly, the glycine cleavage system is composed of four proteins: P, T, L and H. The cofactor is (R)-lipoate.

Functionally, the glycine cleavage system catalyzes the degradation of glycine. The H protein shuttles the methylamine group of glycine from the P protein to the T protein. The protein is Probable glycine cleavage system H protein of Pyrococcus horikoshii (strain ATCC 700860 / DSM 12428 / JCM 9974 / NBRC 100139 / OT-3).